The chain runs to 155 residues: 6,7-dimethyl-8-ribityllumazine synthase (155 aa).

5-amino-6-(D-ribitylamino)uracil contacts are provided by residues W18, 52 to 54 (AFE), and 76 to 78 (LVV). Catalysis depends on R84, which acts as the Proton donor. S109 contacts 5-amino-6-(D-ribitylamino)uracil. H123 is a (2S)-2-hydroxy-3-oxobutyl phosphate binding site.

It belongs to the DMRL synthase family.

It carries out the reaction (2S)-2-hydroxy-3-oxobutyl phosphate + 5-amino-6-(D-ribitylamino)uracil = 6,7-dimethyl-8-(1-D-ribityl)lumazine + phosphate + 2 H2O + H(+). It functions in the pathway cofactor biosynthesis; riboflavin biosynthesis; riboflavin from 2-hydroxy-3-oxobutyl phosphate and 5-amino-6-(D-ribitylamino)uracil: step 1/2. Functionally, catalyzes the formation of 6,7-dimethyl-8-ribityllumazine by condensation of 5-amino-6-(D-ribitylamino)uracil with 3,4-dihydroxy-2-butanone 4-phosphate. This is the penultimate step in the biosynthesis of riboflavin. The sequence is that of 6,7-dimethyl-8-ribityllumazine synthase from Rhodococcus erythropolis (Arthrobacter picolinophilus).